The sequence spans 147 residues: Hemoglobin subunit delta (147 aa).

Positions 3–147 (HLTPEEKAAV…VATALAHKYH (145 aa)) constitute a Globin domain. Heme b is bound by residues His-64 and His-93.

Belongs to the globin family. As to quaternary structure, heterotetramer of two delta chains and two alpha chains. As to expression, red blood cells.

The polypeptide is Hemoglobin subunit delta (HBD) (Ateles geoffroyi (Black-handed spider monkey)).